The primary structure comprises 537 residues: MAKIIKYDEEARQGMLEGLDELANTVKVTLGPKGRNVVLDKSYGAPTITNDGVSIAKEIDLEDPYQRIGAELVKEVAKKTDDVAGDGTTTATVLAQALVHEGLKNVTSGSNPIALRRGIEKASQTIVKNLLENAKPVETKDQIAATATISAGDPEVGEKIAEALDKVGQDGVVTVEDNNKFGLDLDFTEGMRFDKGYISPYFVTNADDQTAVLEDPYILLTSGKVSSQQDIVHIADLVIKSGKPLLIVAEDVDGEALPTLVLNKIRGTFNTVAVKAPGFGDRRKAMLQDMAILTGAQVVSDELGLKLDSIDDTVLGHAAKVIVSKDETTIVSGAGSKEDIAARVAQIRSEIEASDSDYDREKLQERLAKLAGGVAVIKVGAATEVEAKERKHRIEDAVRNAKAAIEEGLLPGGGVALVQAAGEAEKSVKLDGDEATGADIVFRAIEAPLKQIAENAGLSGEVVIDKVRTLPAGSGLNAATGEYEDLMKAGVTDPVKVTRSALQNAASIAGLFLTTEAVVANKPEPPAPAAAQPDMGY.

ATP-binding positions include 29–32, 86–90, G413, 477–479, and D493; these read TLGP, DGTTT, and NAA.

It belongs to the chaperonin (HSP60) family. Forms a cylinder of 14 subunits composed of two heptameric rings stacked back-to-back. Interacts with the co-chaperonin GroES.

Its subcellular location is the cytoplasm. It catalyses the reaction ATP + H2O + a folded polypeptide = ADP + phosphate + an unfolded polypeptide.. Functionally, together with its co-chaperonin GroES, plays an essential role in assisting protein folding. The GroEL-GroES system forms a nano-cage that allows encapsulation of the non-native substrate proteins and provides a physical environment optimized to promote and accelerate protein folding. The protein is Chaperonin GroEL of Parascardovia denticolens (Bifidobacterium denticolens).